A 198-amino-acid chain; its full sequence is Recombination protein RecR (198 aa).

The C4-type zinc-finger motif lies at 57-72 (CSLCGNLDTVDPCHIC). The Toprim domain maps to 80-175 (GLICVVETVG…TVTRVGHGVP (96 aa)).

It belongs to the RecR family.

In terms of biological role, may play a role in DNA repair. It seems to be involved in an RecBC-independent recombinational process of DNA repair. It may act with RecF and RecO. In Gluconobacter oxydans (strain 621H) (Gluconobacter suboxydans), this protein is Recombination protein RecR.